The sequence spans 4625 residues: Dynein-1-alpha heavy chain, flagellar inner arm I1 complex (4625 aa).

A stem region spans residues 1 to 1919; it reads MDRRLEWVKE…LIRQCTGLFK (1919 aa). A compositionally biased stretch (acidic residues) spans 70–84; sequence EQAPEAEDGEGEEHD. The disordered stretch occupies residues 70–163; it reads EQAPEAEDGE…DEPPAPPAPK (94 aa). Residues 111-140 are compositionally biased toward low complexity; it reads EDAPAAAAEANGANPEDEAAAPADGAADGA. Over residues 144-155 the composition is skewed to acidic residues; it reads GGEEGDGAEGDE. 960–967 is an ATP binding site; the sequence is AGTNSGKS. 2 coiled-coil regions span residues 1227 to 1259 and 1339 to 1409; these read EELKQVLNTVNTIRGESMVMELRYADLEERYRT and TVEL…AVRQ. 4 AAA regions span residues 1920-2141, 2201-2437, 2550-2800, and 2906-3155; these read YGYE…VLVM, DVVE…RRPK, EPPA…IYEG, and NFYN…LRRY. ATP contacts are provided by residues 1958–1965, 2242–2249, 2588–2595, and 2945–2952; these read GPAGTGKT, GQTGGGKT, GESGTAKS, and GVGGSGKQ. Coiled-coil stretches lie at residues 3192 to 3297 and 3400 to 3494; these read LEKL…IRSY and KRKK…LIGD. The tract at residues 3192–3494 is stalk; that stretch reads LEKLIQAAVE…ESRRDRLIGD (303 aa). AAA stretches follow at residues 3542–3773 and 3998–4216; these read LTSD…EIAE and ITRF…LIST. Position 3680-3687 (3680-3687) interacts with ATP; the sequence is GPEISGKT. Residues 3701–3788 adopt a coiled-coil conformation; it reads EQLLNVTLRH…KVTAAEIEET (88 aa).

It belongs to the dynein heavy chain family. In terms of assembly, the I1 inner arm complex (also known as the f dynein complex) is a two-headed isoform composed of two heavy chains (1-alpha and 1-beta), three intermediate chains and three light chains. I1 occupies a specific position proximal to the first radial spoke and repeats every 96 nm along the length of the axoneme.

It is found in the cell projection. It localises to the cilium. The protein resides in the flagellum. The protein localises to the cytoplasm. Its subcellular location is the cytoskeleton. It is found in the flagellum axoneme. Its function is as follows. Force generating protein of eukaryotic cilia and flagella. Produces force towards the minus ends of microtubules. Dynein has ATPase activity; the force-producing power stroke is thought to occur on release of ADP. Required for assembly of the I1 inner arm complex and its targeting to the appropriate axoneme location. Also required for phototaxis. This Chlamydomonas reinhardtii (Chlamydomonas smithii) protein is Dynein-1-alpha heavy chain, flagellar inner arm I1 complex (DHC1).